Consider the following 311-residue polypeptide: Ribose-5-phosphate isomerase (311 aa).

Residues 22-32 (AGGAASGGGGN) are compositionally biased toward gly residues. Residues 22 to 67 (AGGAASGGGGNSWDLPGSHVRLPGRAQSGTRGGAGNTSTSCGDSNS) are disordered. At Arg52 the chain carries Omega-N-methylarginine. Residues 57–67 (NTSTSCGDSNS) show a composition bias toward polar residues. Ser106 is subject to Phosphoserine.

Belongs to the ribose 5-phosphate isomerase family.

It carries out the reaction aldehydo-D-ribose 5-phosphate = D-ribulose 5-phosphate. It functions in the pathway carbohydrate degradation; pentose phosphate pathway; D-ribose 5-phosphate from D-ribulose 5-phosphate (non-oxidative stage): step 1/1. In terms of biological role, catalyzes the reversible conversion of ribose-5-phosphate to ribulose 5-phosphate and participates in the first step of the non-oxidative branch of the pentose phosphate pathway. This Homo sapiens (Human) protein is Ribose-5-phosphate isomerase.